Reading from the N-terminus, the 525-residue chain is MATPTQEAIDTFMTITGSSNAVAVRKLEEYRGNLNRAVNAYFTHGDQNSYDAMDIDDGVTPVLSEARTTDPFPLRDPNFGRSLFDNDPVMSRPPFVSHPREAREIPIEVKDSNGPSGQSNDAPTIEDVTETAQAHGPAAQEAVIIDEVSDDDNQSAPTGQSRHAVPVGSAENNMQHYNDIEEQIIRAAIEASKMETGDDVTKSVTVQSAEREVLRSEGWKASSSEREASEMVSIPVQQGSRASNGRFAAPSSLSEDDDDDDDDDPDYVEEEEEPLVSHRPRRAVSGSRSSLNDDLPRSPEAEDATIHSPGAGNGFPSEWGGISSEEHDEAIMLEAAMFGGISESEYGVPYAHYPQRTQRPPSPSLTAQRLIREQQDDEYLASLEADRVKAEARRLEEEAARVEAIEEAKRKEEEARRKVEEEQELERQLVSKEASLPQEPPAGEENAITLQVRLPDGTRHGRRFFKSDKLQSLFDFIDICRVVKPNTYRLVRPYPRRAFGDGECSSTLNDIGLTSKQEALFLELI.

Residues 2 to 44 form the UBA-like domain; it reads ATPTQEAIDTFMTITGSSNAVAVRKLEEYRGNLNRAVNAYFTH. Disordered stretches follow at residues 67 to 96, 150 to 172, and 194 to 328; these read RTTD…PPFV, DDDN…SAEN, and METG…EEHD. The segment covering 209-229 has biased composition (basic and acidic residues); sequence AEREVLRSEGWKASSSEREAS. A compositionally biased stretch (acidic residues) spans 254–274; that stretch reads SEDDDDDDDDDPDYVEEEEEP. Residue Ser-362 is modified to Phosphoserine. The stretch at 380–436 forms a coiled coil; that stretch reads LASLEADRVKAEARRLEEEAARVEAIEEAKRKEEEARRKVEEEQELERQLVSKEASL. Residues 408-430 are compositionally biased toward basic and acidic residues; the sequence is AKRKEEEARRKVEEEQELERQLV. Residues 408-446 are disordered; the sequence is AKRKEEEARRKVEEEQELERQLVSKEASLPQEPPAGEEN. The UBX domain maps to 443-521; that stretch reads GEENAITLQV…GLTSKQEALF (79 aa).

The protein is Plant UBX domain-containing protein 13 of Arabidopsis thaliana (Mouse-ear cress).